A 356-amino-acid chain; its full sequence is uncharacterized protein (356 aa).

Positions 1–21 are cleaved as a signal peptide; it reads MHWSRFVGIFLVFSVFSLVNC. A disordered region spans residues 293–317; it reads RPETDYEGANLPNIPSKKGSANQPV.

This is an uncharacterized protein from Acanthamoeba polyphaga mimivirus (APMV).